The primary structure comprises 392 residues: G2/mitotic-specific cyclin-B (392 aa).

The protein belongs to the cyclin family. Cyclin AB subfamily.

Functionally, essential for the control of the cell cycle at the G2/M (mitosis) transition. Interacts with the CDC2 protein kinase to form MPF. G2/M cyclins accumulate steadily during G2 and are abruptly destroyed at mitosis. The chain is G2/mitotic-specific cyclin-B from Hydra viridissima (Green hydra).